The following is a 602-amino-acid chain: Raftlin (602 aa).

Gly-2 carries N-myristoyl glycine lipidation. Residue Cys-3 is the site of S-palmitoyl cysteine attachment. Residues 178 to 195 (TPASNNSVQSRDNKNVSN) show a composition bias toward polar residues. Disordered regions lie at residues 178–282 (TPAS…RCSK), 451–495 (KKES…EVTE), and 524–567 (NETA…QSAP). 2 stretches are compositionally biased toward basic and acidic residues: residues 197–209 (PEDHASLDGEKID) and 244–265 (PDCKSAKGSKEQHEHPGGREAP). Residues 468–477 (KPMKKSRKTK) show a composition bias toward basic residues.

This sequence belongs to the raftlin family.

It is found in the cell membrane. In terms of biological role, may play a pivotal role in the formation and/or maintenance of lipid rafts. May regulate B-cell antigen receptor-mediated signaling. This Gallus gallus (Chicken) protein is Raftlin (RFTN1).